Here is a 117-residue protein sequence, read N- to C-terminus: Large ribosomal subunit protein bL20 (117 aa).

It belongs to the bacterial ribosomal protein bL20 family.

In terms of biological role, binds directly to 23S ribosomal RNA and is necessary for the in vitro assembly process of the 50S ribosomal subunit. It is not involved in the protein synthesizing functions of that subunit. The chain is Large ribosomal subunit protein bL20 (rplT) from Synechocystis sp. (strain ATCC 27184 / PCC 6803 / Kazusa).